Here is a 138-residue protein sequence, read N- to C-terminus: MLSPKKVKYRKKQRGRLSGEAHKGNKISFGEYGLVSLDTYFITARQIEAARVAMTRRVKRGGKVWIRIFPDVPYTKKPAETRMGKGKGGVDHWNAPVKIGTVMFEMAGVPRELAEAAMMLASSKLPVKTTFVVRRDLR.

Over residues 1-15 (MLSPKKVKYRKKQRG) the composition is skewed to basic residues. The segment at 1–20 (MLSPKKVKYRKKQRGRLSGE) is disordered.

Belongs to the universal ribosomal protein uL16 family. In terms of assembly, part of the 50S ribosomal subunit.

In terms of biological role, binds 23S rRNA and is also seen to make contacts with the A and possibly P site tRNAs. This is Large ribosomal subunit protein uL16 from Borrelia hermsii (strain HS1 / DAH).